A 96-amino-acid chain; its full sequence is Co-chaperonin GroES (96 aa).

The protein belongs to the GroES chaperonin family. In terms of assembly, heptamer of 7 subunits arranged in a ring. Interacts with the chaperonin GroEL.

The protein resides in the cytoplasm. Together with the chaperonin GroEL, plays an essential role in assisting protein folding. The GroEL-GroES system forms a nano-cage that allows encapsulation of the non-native substrate proteins and provides a physical environment optimized to promote and accelerate protein folding. GroES binds to the apical surface of the GroEL ring, thereby capping the opening of the GroEL channel. In Streptococcus pyogenes serotype M18 (strain MGAS8232), this protein is Co-chaperonin GroES.